A 161-amino-acid chain; its full sequence is NADH-quinone oxidoreductase subunit I (161 aa).

2 consecutive 4Fe-4S ferredoxin-type domains span residues 52–82 and 92–121; these read LRRYPNGEERCIACKLCEAVCPAQAITIESS and TRYDIDMMKCIYCGLCEESCPVDAIVQGPN. Residues cysteine 62, cysteine 65, cysteine 68, cysteine 72, cysteine 101, cysteine 104, cysteine 107, and cysteine 111 each contribute to the [4Fe-4S] cluster site.

Belongs to the complex I 23 kDa subunit family. As to quaternary structure, NDH-1 is composed of 14 different subunits. Subunits NuoA, H, J, K, L, M, N constitute the membrane sector of the complex. [4Fe-4S] cluster is required as a cofactor.

It localises to the cell inner membrane. The catalysed reaction is a quinone + NADH + 5 H(+)(in) = a quinol + NAD(+) + 4 H(+)(out). NDH-1 shuttles electrons from NADH, via FMN and iron-sulfur (Fe-S) centers, to quinones in the respiratory chain. The immediate electron acceptor for the enzyme in this species is believed to be ubiquinone. Couples the redox reaction to proton translocation (for every two electrons transferred, four hydrogen ions are translocated across the cytoplasmic membrane), and thus conserves the redox energy in a proton gradient. In Pelagibacter ubique (strain HTCC1062), this protein is NADH-quinone oxidoreductase subunit I.